The primary structure comprises 350 residues: Hydroxymethylglutaryl-CoA synthase (350 aa).

Asp30 contacts (3S)-3-hydroxy-3-methylglutaryl-CoA. The active-site Proton donor/acceptor is the Glu82. 4 residues coordinate (3S)-3-hydroxy-3-methylglutaryl-CoA: Cys114, Ser155, Thr203, and His236. Residue Cys114 is the Acyl-thioester intermediate of the active site. His236 serves as the catalytic Proton donor/acceptor. A CoA-binding site is contributed by Arg241. (3S)-3-hydroxy-3-methylglutaryl-CoA contacts are provided by Arg245, Asn268, and Ser298.

It belongs to the thiolase-like superfamily. Archaeal HMG-CoA synthase family. In terms of assembly, interacts with acetoacetyl-CoA thiolase that catalyzes the precedent step in the pathway and with a DUF35 protein. The acetoacetyl-CoA thiolase/HMG-CoA synthase complex channels the intermediate via a fused CoA-binding site, which allows for efficient coupling of the endergonic thiolase reaction with the exergonic HMGCS reaction.

It catalyses the reaction acetoacetyl-CoA + acetyl-CoA + H2O = (3S)-3-hydroxy-3-methylglutaryl-CoA + CoA + H(+). It functions in the pathway metabolic intermediate biosynthesis; (R)-mevalonate biosynthesis; (R)-mevalonate from acetyl-CoA: step 2/3. In terms of biological role, catalyzes the condensation of acetyl-CoA with acetoacetyl-CoA to form 3-hydroxy-3-methylglutaryl-CoA (HMG-CoA). Functions in the mevalonate (MVA) pathway leading to isopentenyl diphosphate (IPP), a key precursor for the biosynthesis of isoprenoid compounds that are building blocks of archaeal membrane lipids. The protein is Hydroxymethylglutaryl-CoA synthase of Pyrobaculum aerophilum (strain ATCC 51768 / DSM 7523 / JCM 9630 / CIP 104966 / NBRC 100827 / IM2).